The sequence spans 237 residues: Derlin-2 (237 aa).

Residues 1-20 are Cytoplasmic-facing; that stretch reads MNGVVAALEEMPPVTRFYTG. The chain crosses the membrane as a helical span at residues 21-41; it reads ACVLLTTAVHLEFVTPFHLYF. The Lumenal portion of the chain corresponds to 42-54; the sequence is NWELIIRKYQFWR. A helical transmembrane segment spans residues 55 to 75; the sequence is LITSFCFFGSFGFSFLFNMIF. At 76–97 the chain is on the cytoplasmic side; that stretch reads TYRYCMMLEEGSFRGRRADFVY. The helical transmembrane segment at 98 to 118 threads the bilayer; that stretch reads MFLFGAVLMILSGIFVQILFL. Over 119 to 166 the chain is Lumenal; sequence GQAFTIMLVYIWSRRNPMIQMNFFGVLTFTAPYLPWVLLLFSLLLGNN. Residues 167-187 form a helical membrane-spanning segment; the sequence is AVVDFMGIACGHIYFFLEDVF. At 188–237 the chain is on the cytoplasmic side; the sequence is PFQEHGKRFLKTPQWLVYLFDERRPEPLPEDERPGGFEWGDEQPEQEQHD. The span at 212–222 shows a compositional bias: basic and acidic residues; sequence PEPLPEDERPG. Residues 212–237 form a disordered region; the sequence is PEPLPEDERPGGFEWGDEQPEQEQHD. Residues 226-237 are compositionally biased toward acidic residues; it reads WGDEQPEQEQHD.

It belongs to the derlin family.

It localises to the endoplasmic reticulum membrane. May be required for the degradation process of some specific misfolded endoplasmic reticulum (ER) luminal proteins. Participates in the transfer of misfolded proteins from the ER to the cytosol, where they are destroyed by the proteasome in a ubiquitin-dependent manner. Its precise function remains unclear, but its ability to complement der1 mutations in C.cerevisiae, suggests a similar function in the degradation of ER misfolded proteins. This chain is Derlin-2, found in Caenorhabditis elegans.